The chain runs to 207 residues: Putative threonylcarbamoyl-AMP synthase (207 aa).

The YrdC-like domain maps to 15-199 (EEERKKVLEF…KIISIREGVI (185 aa)).

Belongs to the SUA5 family.

It is found in the cytoplasm. The catalysed reaction is L-threonine + hydrogencarbonate + ATP = L-threonylcarbamoyladenylate + diphosphate + H2O. Its function is as follows. Required for the formation of a threonylcarbamoyl group on adenosine at position 37 (t(6)A37) in tRNAs that read codons beginning with adenine. Catalyzes the conversion of L-threonine, HCO(3)(-)/CO(2) and ATP to give threonylcarbamoyl-AMP (TC-AMP) as the acyladenylate intermediate, with the release of diphosphate. The protein is Putative threonylcarbamoyl-AMP synthase of Methanocaldococcus jannaschii (strain ATCC 43067 / DSM 2661 / JAL-1 / JCM 10045 / NBRC 100440) (Methanococcus jannaschii).